Here is a 355-residue protein sequence, read N- to C-terminus: Holliday junction branch migration complex subunit RuvB (355 aa).

A disordered region spans residues 1–26 (MSIQTDDFASSSPAARRVVSTAPASP). A large ATPase domain (RuvB-L) region spans residues 5–196 (TDDFASSSPA…FGIVARLEFY (192 aa)). The span at 9–22 (ASSSPAARRVVSTA) shows a compositional bias: low complexity. ATP contacts are provided by residues leucine 35, arginine 36, glycine 77, lysine 80, threonine 81, threonine 82, 143-145 (EDY), arginine 186, tyrosine 196, and arginine 233. Position 81 (threonine 81) interacts with Mg(2+). Residues 197–267 (SVEELARIVT…IADKALAMLD (71 aa)) are small ATPAse domain (RuvB-S). Positions 270 to 355 (PQGFDVMDRK…TTSGSELFDA (86 aa)) are head domain (RuvB-H). DNA contacts are provided by arginine 325 and arginine 330.

It belongs to the RuvB family. Homohexamer. Forms an RuvA(8)-RuvB(12)-Holliday junction (HJ) complex. HJ DNA is sandwiched between 2 RuvA tetramers; dsDNA enters through RuvA and exits via RuvB. An RuvB hexamer assembles on each DNA strand where it exits the tetramer. Each RuvB hexamer is contacted by two RuvA subunits (via domain III) on 2 adjacent RuvB subunits; this complex drives branch migration. In the full resolvosome a probable DNA-RuvA(4)-RuvB(12)-RuvC(2) complex forms which resolves the HJ.

It is found in the cytoplasm. The enzyme catalyses ATP + H2O = ADP + phosphate + H(+). In terms of biological role, the RuvA-RuvB-RuvC complex processes Holliday junction (HJ) DNA during genetic recombination and DNA repair, while the RuvA-RuvB complex plays an important role in the rescue of blocked DNA replication forks via replication fork reversal (RFR). RuvA specifically binds to HJ cruciform DNA, conferring on it an open structure. The RuvB hexamer acts as an ATP-dependent pump, pulling dsDNA into and through the RuvAB complex. RuvB forms 2 homohexamers on either side of HJ DNA bound by 1 or 2 RuvA tetramers; 4 subunits per hexamer contact DNA at a time. Coordinated motions by a converter formed by DNA-disengaged RuvB subunits stimulates ATP hydrolysis and nucleotide exchange. Immobilization of the converter enables RuvB to convert the ATP-contained energy into a lever motion, pulling 2 nucleotides of DNA out of the RuvA tetramer per ATP hydrolyzed, thus driving DNA branch migration. The RuvB motors rotate together with the DNA substrate, which together with the progressing nucleotide cycle form the mechanistic basis for DNA recombination by continuous HJ branch migration. Branch migration allows RuvC to scan DNA until it finds its consensus sequence, where it cleaves and resolves cruciform DNA. The chain is Holliday junction branch migration complex subunit RuvB from Methylibium petroleiphilum (strain ATCC BAA-1232 / LMG 22953 / PM1).